We begin with the raw amino-acid sequence, 353 residues long: Nicotinate-nucleotide--dimethylbenzimidazole phosphoribosyltransferase (353 aa).

The Proton acceptor role is filled by Glu320.

Belongs to the CobT family.

It carries out the reaction 5,6-dimethylbenzimidazole + nicotinate beta-D-ribonucleotide = alpha-ribazole 5'-phosphate + nicotinate + H(+). It functions in the pathway nucleoside biosynthesis; alpha-ribazole biosynthesis; alpha-ribazole from 5,6-dimethylbenzimidazole: step 1/2. In terms of biological role, catalyzes the synthesis of alpha-ribazole-5'-phosphate from nicotinate mononucleotide (NAMN) and 5,6-dimethylbenzimidazole (DMB). The chain is Nicotinate-nucleotide--dimethylbenzimidazole phosphoribosyltransferase from Syntrophotalea carbinolica (strain DSM 2380 / NBRC 103641 / GraBd1) (Pelobacter carbinolicus).